A 190-amino-acid polypeptide reads, in one-letter code: Ribose 1,5-bisphosphate phosphokinase PhnN (190 aa).

Glycine 10–aspartate 17 serves as a coordination point for ATP.

The protein belongs to the ribose 1,5-bisphosphokinase family.

It carries out the reaction alpha-D-ribose 1,5-bisphosphate + ATP = 5-phospho-alpha-D-ribose 1-diphosphate + ADP. It functions in the pathway metabolic intermediate biosynthesis; 5-phospho-alpha-D-ribose 1-diphosphate biosynthesis; 5-phospho-alpha-D-ribose 1-diphosphate from D-ribose 5-phosphate (route II): step 3/3. In terms of biological role, catalyzes the phosphorylation of ribose 1,5-bisphosphate to 5-phospho-D-ribosyl alpha-1-diphosphate (PRPP). This Pseudomonas fluorescens (strain SBW25) protein is Ribose 1,5-bisphosphate phosphokinase PhnN.